Consider the following 701-residue polypeptide: Glycine--tRNA ligase beta subunit (701 aa).

Belongs to the class-II aminoacyl-tRNA synthetase family. In terms of assembly, tetramer of two alpha and two beta subunits.

The protein localises to the cytoplasm. The enzyme catalyses tRNA(Gly) + glycine + ATP = glycyl-tRNA(Gly) + AMP + diphosphate. This Bradyrhizobium sp. (strain BTAi1 / ATCC BAA-1182) protein is Glycine--tRNA ligase beta subunit.